We begin with the raw amino-acid sequence, 680 residues long: uncharacterized protein (680 aa).

Belongs to the HyuA family.

This is an uncharacterized protein from Methanocaldococcus jannaschii (strain ATCC 43067 / DSM 2661 / JAL-1 / JCM 10045 / NBRC 100440) (Methanococcus jannaschii).